The following is a 496-amino-acid chain: Autophagy-related protein 21 (496 aa).

Residues 1 to 35 (MKVLQFNQDATCCVVAASSHQISIFNCDPFGKCFE) form a WD 1 repeat. The tract at residues 41 to 86 (SKKKTSNNNGTASNSESRNNEESILITNGSRDRTDAEEEEDNEDNA) is disordered. A compositionally biased stretch (low complexity) spans 46-57 (SNNNGTASNSES). A compositionally biased stretch (acidic residues) spans 75 to 84 (DAEEEEDNED). The stretch at 148-190 (VMNRKRMCVLLESDQIFIYDISCMKPLETIDLWEDHYKRSQAN) is one WD 2 repeat. At T213 the chain carries Phosphothreonine. The residue at position 237 (S237) is a Phosphoserine. WD repeat units lie at residues 294–334 (VHKG…DYMS), 346–385 (TRLC…NSLP), and 448–488 (VNES…GECV). The L/FRRG motif signature appears at 342–346 (FRRGT).

It belongs to the WD repeat PROPPIN family.

Its subcellular location is the cytoplasm. It localises to the vacuole membrane. Functionally, required for cytoplasm to vacuole transport (Cvt) vesicles formation and mitophagy. Involved in binding of phosphatidylethanolamine to ATG8 and in recruitment of ATG8 and ATG5 to the pre-autophagosomal structure. Protects ATG8 from ARG4-mediated cleavage. Essential for maturation of proaminopeptidase I. The chain is Autophagy-related protein 21 (ATG21) from Saccharomyces cerevisiae (strain YJM789) (Baker's yeast).